The chain runs to 73 residues: Small ribosomal subunit protein bS18B (73 aa).

It belongs to the bacterial ribosomal protein bS18 family. As to quaternary structure, part of the 30S ribosomal subunit. Forms a tight heterodimer with protein bS6.

Binds as a heterodimer with protein bS6 to the central domain of the 16S rRNA, where it helps stabilize the platform of the 30S subunit. The chain is Small ribosomal subunit protein bS18B from Frankia alni (strain DSM 45986 / CECT 9034 / ACN14a).